A 573-amino-acid polypeptide reads, in one-letter code: Sulfate adenylyltransferase (573 aa).

The tract at residues 1 to 169 is N-terminal; sequence MANPPHGGIL…VEAVNKLNHY (169 aa). Residues 170–394 are catalytic; sequence DYVGLRFTPA…LRESNPPRSK (225 aa). Glutamine 197 contacts sulfate. Residues 197-200 and 291-294 each bind ATP; these read QTRN and GRDH. Active-site residues include threonine 198, arginine 199, and asparagine 200. Arginine 199 provides a ligand contact to sulfate. Alanine 295 is a binding site for sulfate. Leucine 333 provides a ligand contact to ATP. The allosteric regulation domain; adenylyl-sulfate kinase-like stretch occupies residues 395 to 573; sequence QGFTVFLTGY…LESQGFLEKA (179 aa). 3'-phosphoadenylyl sulfate is bound by residues 434–437, arginine 451, 477–478, and arginine 515; these read DTVR and IA.

The protein in the N-terminal section; belongs to the sulfate adenylyltransferase family. This sequence in the C-terminal section; belongs to the APS kinase family. As to quaternary structure, homohexamer. Dimer of trimers.

It is found in the cytoplasm. It catalyses the reaction sulfate + ATP + H(+) = adenosine 5'-phosphosulfate + diphosphate. Its pathway is sulfur metabolism; hydrogen sulfide biosynthesis; sulfite from sulfate: step 1/3. Allosterically inhibited by 3'-phosphoadenosine 5'-phosphosulfate (PAPS). In terms of biological role, catalyzes the first intracellular reaction of sulfate assimilation, forming adenosine-5'-phosphosulfate (APS) from inorganic sulfate and ATP. Plays an important role in sulfate activation as a component of the biosynthesis pathway of sulfur-containing amino acids. This Coccidioides immitis (strain RS) (Valley fever fungus) protein is Sulfate adenylyltransferase.